Reading from the N-terminus, the 179-residue chain is Ribosome maturation factor RimM (179 aa).

The 74-residue stretch at 97 to 170 (DGELSWNFFV…LITVELPEGL (74 aa)) folds into the PRC barrel domain.

This sequence belongs to the RimM family. As to quaternary structure, binds ribosomal protein uS19.

Its subcellular location is the cytoplasm. Its function is as follows. An accessory protein needed during the final step in the assembly of 30S ribosomal subunit, possibly for assembly of the head region. Essential for efficient processing of 16S rRNA. May be needed both before and after RbfA during the maturation of 16S rRNA. It has affinity for free ribosomal 30S subunits but not for 70S ribosomes. This chain is Ribosome maturation factor RimM, found in Bacteroides thetaiotaomicron (strain ATCC 29148 / DSM 2079 / JCM 5827 / CCUG 10774 / NCTC 10582 / VPI-5482 / E50).